A 120-amino-acid polypeptide reads, in one-letter code: NAD(P)H-quinone oxidoreductase subunit 3, organellar chromatophore (120 aa).

A run of 3 helical transmembrane segments spans residues 6-26 (GYDA…LALL), 64-84 (MFAL…PWAV), and 89-109 (LGLL…IALA).

The protein belongs to the complex I subunit 3 family. As to quaternary structure, NDH is composed of at least 16 different subunits, 5 of which are encoded in the nucleus.

It is found in the plastid. The protein localises to the organellar chromatophore thylakoid membrane. The enzyme catalyses a plastoquinone + NADH + (n+1) H(+)(in) = a plastoquinol + NAD(+) + n H(+)(out). It carries out the reaction a plastoquinone + NADPH + (n+1) H(+)(in) = a plastoquinol + NADP(+) + n H(+)(out). Functionally, NDH shuttles electrons from NAD(P)H:plastoquinone, via FMN and iron-sulfur (Fe-S) centers, to quinones in the photosynthetic chain and possibly in a chloroplast respiratory chain. The immediate electron acceptor for the enzyme in this species is believed to be plastoquinone. Couples the redox reaction to proton translocation, and thus conserves the redox energy in a proton gradient. The protein is NAD(P)H-quinone oxidoreductase subunit 3, organellar chromatophore of Paulinella chromatophora.